We begin with the raw amino-acid sequence, 200 residues long: 3-isopropylmalate dehydratase small subunit (200 aa).

It belongs to the LeuD family. LeuD type 1 subfamily. As to quaternary structure, heterodimer of LeuC and LeuD.

The enzyme catalyses (2R,3S)-3-isopropylmalate = (2S)-2-isopropylmalate. It participates in amino-acid biosynthesis; L-leucine biosynthesis; L-leucine from 3-methyl-2-oxobutanoate: step 2/4. Catalyzes the isomerization between 2-isopropylmalate and 3-isopropylmalate, via the formation of 2-isopropylmaleate. The polypeptide is 3-isopropylmalate dehydratase small subunit (Aliivibrio fischeri (strain ATCC 700601 / ES114) (Vibrio fischeri)).